The chain runs to 711 residues: Ribosomal RNA large subunit methyltransferase K/L (711 aa).

The THUMP domain occupies 43–154 (TLYRTLLWSR…RENLVISLDL (112 aa)).

The protein belongs to the methyltransferase superfamily. RlmKL family.

The protein localises to the cytoplasm. It carries out the reaction guanosine(2445) in 23S rRNA + S-adenosyl-L-methionine = N(2)-methylguanosine(2445) in 23S rRNA + S-adenosyl-L-homocysteine + H(+). The enzyme catalyses guanosine(2069) in 23S rRNA + S-adenosyl-L-methionine = N(2)-methylguanosine(2069) in 23S rRNA + S-adenosyl-L-homocysteine + H(+). Functionally, specifically methylates the guanine in position 2445 (m2G2445) and the guanine in position 2069 (m7G2069) of 23S rRNA. The protein is Ribosomal RNA large subunit methyltransferase K/L of Haemophilus influenzae (strain PittEE).